We begin with the raw amino-acid sequence, 213 residues long: MGYFITFEGIEGCGKTTQIKRAAQSLREAGHRVVVTREPGGCPIADDIRAILLDAGNSAMVPTTELLLYAAARAQHVAEVIAPALAEGAVVLCDRFTDSTLVYQGFGRNLDRDLIARLNTLAAGQIRPDLTILLDCPVAVGLARAAARINSRQTNREERFERESLLFHERVREGFLSLAGGEPHRFAVIDGNDGVEATATAVADVLLNRVPRR.

Residue G9–T16 participates in ATP binding.

This sequence belongs to the thymidylate kinase family.

It catalyses the reaction dTMP + ATP = dTDP + ADP. In terms of biological role, phosphorylation of dTMP to form dTDP in both de novo and salvage pathways of dTTP synthesis. This chain is Thymidylate kinase, found in Geobacter sulfurreducens (strain ATCC 51573 / DSM 12127 / PCA).